The chain runs to 203 residues: Small ribosomal subunit protein uS5 (203 aa).

Residues 1–18 are compositionally biased toward basic and acidic residues; the sequence is MENNVKKETIVDSEKVEK. The interval 1–36 is disordered; the sequence is MENNVKKETIVDSEKVEKQQPVTAPVVNKKENTQPK. The S5 DRBM domain occupies 49–112; sequence FEERVVKIKR…KNANNNLIKV (64 aa).

Belongs to the universal ribosomal protein uS5 family. Part of the 30S ribosomal subunit. Contacts proteins S4 and S8.

With S4 and S12 plays an important role in translational accuracy. Functionally, located at the back of the 30S subunit body where it stabilizes the conformation of the head with respect to the body. This is Small ribosomal subunit protein uS5 from Ureaplasma urealyticum serovar 10 (strain ATCC 33699 / Western).